A 363-amino-acid chain; its full sequence is Pyrimidine monooxygenase RutA (363 aa).

Residues 49-50, Asn-115, Glu-124, 140-141, and Ser-190 contribute to the FMN site; these read IK and RY.

This sequence belongs to the NtaA/SnaA/DszA monooxygenase family. RutA subfamily.

It carries out the reaction uracil + FMNH2 + NADH + O2 = (Z)-3-ureidoacrylate + FMN + NAD(+) + H2O + H(+). The enzyme catalyses thymine + FMNH2 + NADH + O2 = (Z)-2-methylureidoacrylate + FMN + NAD(+) + H2O + H(+). Its function is as follows. Catalyzes the pyrimidine ring opening between N-3 and C-4 by an unusual flavin hydroperoxide-catalyzed mechanism, adding oxygen atoms in the process to yield ureidoacrylate peracid, that immediately reacts with FMN forming ureidoacrylate and FMN-N(5)-oxide. The FMN-N(5)-oxide reacts spontaneously with NADH to produce FMN. Requires the flavin reductase RutF to regenerate FMN in vivo. The chain is Pyrimidine monooxygenase RutA from Enterobacter cloacae subsp. cloacae (strain ATCC 13047 / DSM 30054 / NBRC 13535 / NCTC 10005 / WDCM 00083 / NCDC 279-56).